A 691-amino-acid chain; its full sequence is tRNA-dihydrouridine(47) synthase [NAD(P)(+)]-like (691 aa).

An N-acetylserine modification is found at serine 2. A disordered region spans residues 55-94 (PPPPSRSVKQNDAADVRAPQSGLVQEKKSKRQLKRERREQ). 2 consecutive C3H1-type zinc fingers follow at residues 94–125 (QSTI…HDIE) and 138–163 (QCPF…HRDI). The interval 259-286 (LETEEVRPMKKAKSEDQKNSKTGDVGGV) is disordered. Residues 262 to 279 (EEVRPMKKAKSEDQKNSK) are compositionally biased toward basic and acidic residues. Residues 344–346 (PLT) and glutamine 398 each bind FMN. Cysteine 429 functions as the Proton donor in the catalytic mechanism. FMN contacts are provided by residues lysine 468, histidine 498, 531–533 (NGD), and 556–557 (AR).

The protein belongs to the Dus family. Dus3 subfamily. The cofactor is FMN.

The enzyme catalyses 5,6-dihydrouridine(47) in tRNA + NAD(+) = uridine(47) in tRNA + NADH + H(+). The catalysed reaction is 5,6-dihydrouridine(47) in tRNA + NADP(+) = uridine(47) in tRNA + NADPH + H(+). It carries out the reaction a 5,6-dihydrouridine in mRNA + NAD(+) = a uridine in mRNA + NADH + H(+). It catalyses the reaction a 5,6-dihydrouridine in mRNA + NADP(+) = a uridine in mRNA + NADPH + H(+). Functionally, catalyzes the synthesis of dihydrouridine, a modified base found in the D-loop of most tRNAs. Specifically modifies U47 in cytoplasmic tRNAs. Catalyzes the synthesis of dihydrouridine in some mRNAs, thereby affecting their translation. This Arabidopsis thaliana (Mouse-ear cress) protein is tRNA-dihydrouridine(47) synthase [NAD(P)(+)]-like.